We begin with the raw amino-acid sequence, 90 residues long: Small ribosomal subunit protein bS16 (90 aa).

This sequence belongs to the bacterial ribosomal protein bS16 family.

The chain is Small ribosomal subunit protein bS16 from Listeria innocua serovar 6a (strain ATCC BAA-680 / CLIP 11262).